The sequence spans 501 residues: Galactokinase (501 aa).

Residues Arg54, Glu60, His61, and Asp63 each contribute to the alpha-D-galactose site. Positions 158, 160, 162, and 163 each coordinate ATP. Asp207 is a binding site for alpha-D-galactose. Asp207 acts as the Proton acceptor in catalysis. The ATP site is built by Ser250 and Lys252. Tyr260 contributes to the alpha-D-galactose binding site.

The protein belongs to the GHMP kinase family. GalK subfamily.

It catalyses the reaction alpha-D-galactose + ATP = alpha-D-galactose 1-phosphate + ADP + H(+). The protein operates within carbohydrate metabolism; galactose metabolism. In Dictyostelium discoideum (Social amoeba), this protein is Galactokinase (galK).